A 3387-amino-acid chain; its full sequence is Genome polyprotein (3387 aa).

Residues 1–100 are Cytoplasmic-facing; that stretch reads MNQRKKVVRP…LNILNGRKRS (100 aa). The interval 36–71 is hydrophobic; homodimerization of capsid protein C; that stretch reads LFSGKGPLRMVLAFITFLRVLSIPPTAGILKRWGQL. A propeptide spans 100–113 (ER anchor for the capsid protein C, removed in mature form by serine protease NS3); that stretch reads STVTLLCLIPTVMA. Residues 101 to 117 traverse the membrane as a helical segment; the sequence is TVTLLCLIPTVMAFHLS. Topologically, residues 118–237 are extracellular; it reads TRDGEPLMIV…GAWKHAQRVE (120 aa). Asn182 carries an N-linked (GlcNAc...) asparagine; by host glycan. A helical membrane pass occupies residues 238 to 258; sequence SWILRNPGFALLAGFMAYMIG. At 259–265 the chain is on the cytoplasmic side; it reads QTGIQRT. Residues 266–279 form a helical membrane-spanning segment; sequence VFFVLMMLVAPSYG. Residues 280–725 are Extracellular-facing; the sequence is MRCIGVGNRD…HQVFGSVYTT (446 aa). 4 disulfides stabilise this stretch: Cys282–Cys309, Cys339–Cys400, Cys353–Cys384, and Cys371–Cys395. N-linked (GlcNAc...) asparagine; by host glycosylation occurs at Asn346. Positions 377-390 are fusion peptide; that stretch reads DRGWGNGCGLFGKG. Asn432 carries N-linked (GlcNAc...) asparagine; by host glycosylation. 2 disulfide bridges follow: Cys464-Cys564 and Cys581-Cys612. Residues 726–746 traverse the membrane as a helical segment; the sequence is MFGGVSWMVRILIGLLVLWIG. Residues 747–751 lie on the Cytoplasmic side of the membrane; that stretch reads TNSRN. The chain crosses the membrane as a helical span at residues 752 to 772; that stretch reads TPMAMTCIAVGGITLFLGFTV. The Extracellular portion of the chain corresponds to 773 to 1193; it reads QADMGCVVSW…IMLGDTMLSR (421 aa). 6 disulfide bridges follow: Cys778/Cys789, Cys829/Cys917, Cys953/Cys997, Cys1054/Cys1103, Cys1065/Cys1087, and Cys1086/Cys1090. Residues Asn904 and Asn981 are each glycosylated (N-linked (GlcNAc...) asparagine; by host). Residues 1194-1218 form a helical membrane-spanning segment; that stretch reads VGGQTHLAIMIVFKMSPGYVLGVFL. The Lumenal portion of the chain corresponds to 1219-1224; that stretch reads RKLTSR. The chain crosses the membrane as a helical span at residues 1225-1243; sequence ETALMVIGMAMTTVFSIPH. Residues 1244–1267 are Cytoplasmic-facing; sequence DLMELIDGISLGLILLKMVTHFDN. Residues 1268–1288 form a helical membrane-spanning segment; the sequence is TQVGTLALSLTFIRSTMPLTM. Position 1289 (Ala1289) is a topological domain, lumenal. Residues 1290–1308 traverse the membrane as a helical segment; that stretch reads WRTIMAVLFAVTLIPLCRT. Over 1309–1316 the chain is Lumenal; it reads SCLQKQSH. A helical transmembrane segment spans residues 1317–1337; sequence WVEITAIILGAQALPVYLMTL. Topologically, residues 1338 to 1345 are cytoplasmic; the sequence is MKGASKRS. Residues 1346 to 1366 form a helical membrane-spanning segment; the sequence is WPLNEGIMAVGLVSLLGSALL. Residues 1367–1369 lie on the Lumenal side of the membrane; that stretch reads KND. A helical transmembrane segment spans residues 1370-1390; it reads VPLAGPMVAGGLLLAAYVMSG. At 1391–1444 the chain is on the cytoplasmic side; it reads SSADLSLERAANVQWDEMADITGSSPIIEVKQDEDGSFSIRDVEETNMITLLVK. The segment at 1397 to 1436 is interacts with and activates NS3 protease; it reads LERAANVQWDEMADITGSSPIIEVKQDEDGSFSIRDVEET. The segment at residues 1445–1465 is an intramembrane region (helical); that stretch reads LALITVSGLYPLAIPITMTLW. At 1466–2146 the chain is on the cytoplasmic side; it reads YMWQVRTQRS…LNELPESLET (681 aa). The 178-residue stretch at 1475 to 1652 folds into the Peptidase S7 domain; the sequence is SGALWDVPSP…ERIGEPDYEV (178 aa). Residues His1525, Asp1549, and Ser1609 each act as charge relay system; for serine protease NS3 activity in the active site. Positions 1654-1810 constitute a Helicase ATP-binding domain; sequence EDIFRKKRLT…QSNSPIEDIE (157 aa). The tract at residues 1658-1661 is important for RNA-binding; sequence RKKR. ATP is bound at residue 1667 to 1674; it reads LHPGAGKT. A DEAH box motif is present at residues 1758–1761; sequence DEAH. Positions 1820 to 1987 constitute a Helicase C-terminal domain; sequence TGFDWITDYQ…IIPTLFGPER (168 aa). Lys1862 carries the post-translational modification N6-acetyllysine; by host. Residues 2147 to 2167 traverse the membrane as a helical segment; the sequence is LMLVALLGAMTAGIFLFFMQG. The Lumenal portion of the chain corresponds to 2168–2169; that stretch reads KG. The helical intramembrane region spans 2170 to 2190; the sequence is IGKLSVGLIAIAVASGLLWVA. A topological domain (lumenal) is located at residue Glu2191. A helical transmembrane segment spans residues 2192 to 2212; it reads IQPQWIAASIILEFFLMVLLI. Over 2213–2225 the chain is Cytoplasmic; that stretch reads PEPEKQRTPQDNQ. Residues 2226–2246 traverse the membrane as a helical segment; sequence LIYVILAILTIIGLVAANEMG. Over 2247 to 2270 the chain is Lumenal; sequence LIEKTKADFGFYQVKTETTILDVD. The segment at residues 2271-2291 is an intramembrane region (helical); that stretch reads LRPASAWTLYAVATTILTPML. The Lumenal segment spans residues 2292-2301; it reads RHTIENTSAN. 2 N-linked (GlcNAc...) asparagine; by host glycosylation sites follow: Asn2297 and Asn2301. Residues 2302–2322 constitute an intramembrane region (helical); that stretch reads LSLAAIANQAAVLMGLGKGWP. At 2323–2343 the chain is on the lumenal side; it reads LHRMDLGVPLLAMGCYSQVNP. A helical membrane pass occupies residues 2344–2364; that stretch reads TTLTASLVMLLVHYAIIGPGL. At 2365–2409 the chain is on the cytoplasmic side; that stretch reads QAKATREAQKRTAAGIMKNPTVDGITVIDLEPISYDPKFEKQLGQ. Residues 2410-2430 traverse the membrane as a helical segment; sequence VMLLVLCAGQLLLMRTTWAFC. Residues 2431-2455 lie on the Lumenal side of the membrane; that stretch reads EVLTLATGPVLTLWEGNPGRFWNTT. Asn2453 carries N-linked (GlcNAc...) asparagine; by host glycosylation. Residues 2456–2476 traverse the membrane as a helical segment; sequence IAVSTANIFRGSYLAGAGLAF. Over 2477-3387 the chain is Cytoplasmic; that stretch reads SLIKNAQTPR…SALSESEGVL (911 aa). Residues 2489 to 2751 enclose the mRNA cap 0-1 NS5-type MT domain; sequence TGTTGETLGE…DVDLGAGTRS (263 aa). Ser2543 lines the S-adenosyl-L-methionine pocket. At Ser2543 the chain carries Phosphoserine. Residue Lys2548 is the For 2'-O-MTase activity of the active site. An SUMO-interacting motif motif is present at residues 2564-2567; it reads VVDL. S-adenosyl-L-methionine-binding residues include Gly2573, Trp2574, Thr2591, Lys2592, Asp2618, and Val2619. Asp2633 functions as the For 2'-O-MTase activity in the catalytic mechanism. Position 2634 (Ile2634) interacts with S-adenosyl-L-methionine. Catalysis depends on for 2'-O-MTase activity residues Lys2668 and Glu2704. Tyr2706 lines the S-adenosyl-L-methionine pocket. Zn(2+) contacts are provided by Glu2925, His2929, Cys2934, and Cys2937. In terms of domain architecture, RdRp catalytic spans 3016–3166; sequence LMYADDTAGW…PLDERFSTSL (151 aa). His3200, Cys3216, and Cys3335 together coordinate Zn(2+).

In the N-terminal section; belongs to the class I-like SAM-binding methyltransferase superfamily. mRNA cap 0-1 NS5-type methyltransferase family. Homodimer. Interacts (via N-terminus) with host EXOC1 (via C-terminus); this interaction results in EXOC1 degradation through the proteasome degradation pathway. As to quaternary structure, forms heterodimers with envelope protein E in the endoplasmic reticulum and Golgi. In terms of assembly, homodimer; in the endoplasmic reticulum and Golgi. Interacts with protein prM. Interacts with non-structural protein 1. Homodimer; Homohexamer when secreted. Interacts with envelope protein E. As to quaternary structure, interacts (via N-terminus) with serine protease NS3. In terms of assembly, forms a heterodimer with serine protease NS3. May form homooligomers. Forms a heterodimer with NS2B. Interacts with NS4B. Interacts with unphosphorylated RNA-directed RNA polymerase NS5; this interaction stimulates RNA-directed RNA polymerase NS5 guanylyltransferase activity. Interacts with host SHFL. As to quaternary structure, interacts with host MAVS; this interaction inhibits the synthesis of IFN-beta. Interacts with host SHFL. Interacts with host AUP1; the interaction occurs in the presence of Dengue virus NS4B and induces lipophagy which facilitates production of virus progeny particles. In terms of assembly, interacts with serine protease NS3. Homodimer. Interacts with host STAT2; this interaction inhibits the phosphorylation of the latter, and, when all viral proteins are present (polyprotein), targets STAT2 for degradation. Interacts with serine protease NS3. Interacts with host PAF1 complex; the interaction may prevent the recruitment of the PAF1 complex to interferon-responsive genes, and thus reduces the immune response. In terms of processing, specific enzymatic cleavages in vivo yield mature proteins. Cleavages in the lumen of endoplasmic reticulum are performed by host signal peptidase, whereas cleavages in the cytoplasmic side are performed by serine protease NS3. Signal cleavage at the 2K-4B site requires a prior NS3 protease-mediated cleavage at the 4A-2K site. Post-translationally, cleaved in post-Golgi vesicles by a host furin, releasing the mature small envelope protein M, and peptide pr. This cleavage is incomplete as up to 30% of viral particles still carry uncleaved prM. N-glycosylated. In terms of processing, N-glycosylated. The excreted form is glycosylated and this is required for efficient secretion of the protein from infected cells. Post-translationally, acetylated by host KAT5. Acetylation modulates NS3 RNA-binding and unwinding activities and plays an important positive role for viral replication. Sumoylation of RNA-directed RNA polymerase NS5 increases NS5 protein stability allowing proper viral RNA replication. In terms of processing, phosphorylated on serines residues. This phosphorylation may trigger NS5 nuclear localization.

It localises to the virion. It is found in the host nucleus. Its subcellular location is the host cytoplasm. The protein localises to the host perinuclear region. The protein resides in the secreted. It localises to the virion membrane. It is found in the host endoplasmic reticulum membrane. Its subcellular location is the host mitochondrion. It catalyses the reaction Selective hydrolysis of -Xaa-Xaa-|-Yaa- bonds in which each of the Xaa can be either Arg or Lys and Yaa can be either Ser or Ala.. The catalysed reaction is RNA(n) + a ribonucleoside 5'-triphosphate = RNA(n+1) + diphosphate. The enzyme catalyses a ribonucleoside 5'-triphosphate + H2O = a ribonucleoside 5'-diphosphate + phosphate + H(+). It carries out the reaction ATP + H2O = ADP + phosphate + H(+). It catalyses the reaction a 5'-end (5'-triphosphoguanosine)-ribonucleoside in mRNA + S-adenosyl-L-methionine = a 5'-end (N(7)-methyl 5'-triphosphoguanosine)-ribonucleoside in mRNA + S-adenosyl-L-homocysteine. The catalysed reaction is a 5'-end (N(7)-methyl 5'-triphosphoguanosine)-ribonucleoside in mRNA + S-adenosyl-L-methionine = a 5'-end (N(7)-methyl 5'-triphosphoguanosine)-(2'-O-methyl-ribonucleoside) in mRNA + S-adenosyl-L-homocysteine + H(+). Functionally, plays a role in virus budding by binding to the cell membrane and gathering the viral RNA into a nucleocapsid that forms the core of a mature virus particle. During virus entry, may induce genome penetration into the host cytoplasm after hemifusion induced by the surface proteins. Can migrate to the cell nucleus where it modulates host functions. Overcomes the anti-viral effects of host EXOC1 by sequestering and degrading the latter through the proteasome degradation pathway. Its function is as follows. Inhibits RNA silencing by interfering with host Dicer. Prevents premature fusion activity of envelope proteins in trans-Golgi by binding to envelope protein E at pH6.0. After virion release in extracellular space, gets dissociated from E dimers. In terms of biological role, acts as a chaperone for envelope protein E during intracellular virion assembly by masking and inactivating envelope protein E fusion peptide. prM is the only viral peptide matured by host furin in the trans-Golgi network probably to avoid catastrophic activation of the viral fusion activity in acidic Golgi compartment prior to virion release. prM-E cleavage is inefficient, and many virions are only partially matured. These uncleaved prM would play a role in immune evasion. Functionally, may play a role in virus budding. Exerts cytotoxic effects by activating a mitochondrial apoptotic pathway through M ectodomain. May display a viroporin activity. Its function is as follows. Binds to host cell surface receptor and mediates fusion between viral and cellular membranes. Envelope protein is synthesized in the endoplasmic reticulum in the form of heterodimer with protein prM. They play a role in virion budding in the ER, and the newly formed immature particle is covered with 60 spikes composed of heterodimer between precursor prM and envelope protein E. The virion is transported to the Golgi apparatus where the low pH causes dissociation of PrM-E heterodimers and formation of E homodimers. prM-E cleavage is inefficient, and many virions are only partially matured. These uncleaved prM would play a role in immune evasion. Involved in immune evasion, pathogenesis and viral replication. Once cleaved off the polyprotein, is targeted to three destinations: the viral replication cycle, the plasma membrane and the extracellular compartment. Essential for viral replication. Required for formation of the replication complex and recruitment of other non-structural proteins to the ER-derived membrane structures. Excreted as a hexameric lipoparticle that plays a role against host immune response. Antagonizing the complement function. Binds to the host macrophages and dendritic cells. Inhibits signal transduction originating from Toll-like receptor 3 (TLR3). In terms of biological role, disrupts the host endothelial glycocalyx layer of host pulmonary microvascular endothelial cells, inducing degradation of sialic acid and shedding of heparan sulfate proteoglycans. NS1 induces expression of sialidases, heparanase, and activates cathepsin L, which activates heparanase via enzymatic cleavage. These effects are probably linked to the endothelial hyperpermeability observed in severe dengue disease. Functionally, component of the viral RNA replication complex that functions in virion assembly and antagonizes the host immune response. Its function is as follows. Required cofactor for the serine protease function of NS3. May have membrane-destabilizing activity and form viroporins. Displays three enzymatic activities: serine protease, NTPase and RNA helicase. NS3 serine protease, in association with NS2B, performs its autocleavage and cleaves the polyprotein at dibasic sites in the cytoplasm: C-prM, NS2A-NS2B, NS2B-NS3, NS3-NS4A, NS4A-2K and NS4B-NS5. NS3 RNA helicase binds RNA and unwinds dsRNA in the 3' to 5' direction. In terms of biological role, regulates the ATPase activity of the NS3 helicase activity. NS4A allows NS3 helicase to conserve energy during unwinding. Plays a role in the inhibition of the host innate immune response. Interacts with host MAVS and thereby prevents the interaction between RIGI and MAVS. In turn, IFN-beta production is impaired. Interacts with host AUP1 which mediates induction of lipophagy in host cells and facilitates production of virus progeny particles. Functionally, functions as a signal peptide for NS4B and is required for the interferon antagonism activity of the latter. Its function is as follows. Induces the formation of ER-derived membrane vesicles where the viral replication takes place. Inhibits interferon (IFN)-induced host STAT1 phosphorylation and nuclear translocation, thereby preventing the establishment of cellular antiviral state by blocking the IFN-alpha/beta pathway. Replicates the viral (+) and (-) RNA genome, and performs the capping of genomes in the cytoplasm. NS5 methylates viral RNA cap at guanine N-7 and ribose 2'-O positions. Besides its role in RNA genome replication, also prevents the establishment of cellular antiviral state by blocking the interferon-alpha/beta (IFN-alpha/beta) signaling pathway. Inhibits host TYK2 and STAT2 phosphorylation, thereby preventing activation of JAK-STAT signaling pathway. May reduce immune responses by preventing the recruitment of the host PAF1 complex to interferon-responsive genes. The sequence is that of Genome polyprotein from Aedes aegypti (Yellowfever mosquito).